Reading from the N-terminus, the 1312-residue chain is Probable histone-lysine N-methyltransferase lin-59 (1312 aa).

2 stretches are compositionally biased toward polar residues: residues 1–11 and 25–36; these read MHGAGEQQQRY and STSSHQYQQQGA. Disordered regions lie at residues 1-41, 54-81, 154-223, 312-435, and 524-556; these read MHGA…QMHQ, TTTS…RQQG, QPSG…KPVD, EESK…PPPV, and KDNI…EPSE. A compositionally biased stretch (low complexity) spans 54 to 68; sequence TTTSAAASTSSSGGS. Positions 69–78 are enriched in gly residues; it reads NSSGGSGGHR. A compositionally biased stretch (low complexity) spans 160–176; the sequence is PMSSNAPATTSSATPDS. A compositionally biased stretch (acidic residues) spans 200 to 210; that stretch reads DHDDEEDDDGP. Positions 312 to 321 are enriched in basic and acidic residues; sequence EESKKKKDME. Residues 344 to 367 are compositionally biased toward polar residues; the sequence is ATRSTNSPDVTTSNLPEEPSTSTM. Basic and acidic residues predominate over residues 371 to 382; it reads KENEDVEKVEGK. The segment covering 383 to 394 has biased composition (basic residues); that stretch reads RRGRKPKKRRGF. Basic and acidic residues-rich tracts occupy residues 395–419 and 524–535; these read HKES…DHLP and KDNIKKEVKEES. An AWS domain is found at 590 to 635; the sequence is APSLTCGCTKGACTSDMDCLNRALRVQCSSDCSVPYCSNRRFWKED. The SET domain occupies 638-750; sequence NKLCVSNGPR…PNAEITVDKS (113 aa). Positions 913-934 are disordered; the sequence is DNAPRARALSTSCPSPVPSKRG. Residues 967 to 1027 form a PHD-type zinc finger; it reads AVRCICGALD…EYICDFCTNK (61 aa). In terms of domain architecture, BAH spans 1100–1223; it reads NKYRFPKAAT…KTQRVFEKVP (124 aa). The segment at 1248 to 1295 is disordered; sequence RDFRPYDPSNPSPKPPKTSSIPSTSSIDPPQSSSDGLPEVDTKKLSKR. Low complexity predominate over residues 1264 to 1281; sequence KTSSIPSTSSIDPPQSSS.

This sequence belongs to the class V-like SAM-binding methyltransferase superfamily. Histone-lysine methyltransferase family. SET2 subfamily. Widely expressed throughout embryonic development and into adulthood.

It is found in the nucleus. It catalyses the reaction L-lysyl-[histone] + S-adenosyl-L-methionine = N(6)-methyl-L-lysyl-[histone] + S-adenosyl-L-homocysteine + H(+). Functionally, probable histone methyltransferase. Essential protein required to maintain expression of homeotic genes egl-5 and mab-5. May play an analogous role to the trithorax Group (trxG) proteins. TrxG proteins form multiprotein complexes that are required to maintain the transcriptionally active state of homeotic genes throughout development. May act via a modification of chromatin. The polypeptide is Probable histone-lysine N-methyltransferase lin-59 (lin-59) (Caenorhabditis elegans).